The sequence spans 679 residues: Glycine--tRNA ligase beta subunit (679 aa).

The protein belongs to the class-II aminoacyl-tRNA synthetase family. As to quaternary structure, tetramer of two alpha and two beta subunits.

The protein resides in the cytoplasm. The catalysed reaction is tRNA(Gly) + glycine + ATP = glycyl-tRNA(Gly) + AMP + diphosphate. In Streptococcus pyogenes serotype M6 (strain ATCC BAA-946 / MGAS10394), this protein is Glycine--tRNA ligase beta subunit.